Reading from the N-terminus, the 127-residue chain is Small ribosomal subunit protein uS12 (127 aa).

The segment at 8–28 (IRTEREKARQKTKSPALKQCP) is disordered. Asp-89 is subject to 3-methylthioaspartic acid. The segment at 102-127 (LDTAGVKDRKQGRSKYGTKRPKEAKK) is disordered. Residues 113-127 (GRSKYGTKRPKEAKK) are compositionally biased toward basic residues.

Belongs to the universal ribosomal protein uS12 family. In terms of assembly, part of the 30S ribosomal subunit. Contacts proteins S8 and S17. May interact with IF1 in the 30S initiation complex.

Functionally, with S4 and S5 plays an important role in translational accuracy. Interacts with and stabilizes bases of the 16S rRNA that are involved in tRNA selection in the A site and with the mRNA backbone. Located at the interface of the 30S and 50S subunits, it traverses the body of the 30S subunit contacting proteins on the other side and probably holding the rRNA structure together. The combined cluster of proteins S8, S12 and S17 appears to hold together the shoulder and platform of the 30S subunit. This Nostoc sp. (strain PCC 7120 / SAG 25.82 / UTEX 2576) protein is Small ribosomal subunit protein uS12.